A 414-amino-acid chain; its full sequence is Probable serine/threonine-protein kinase PBL26 (414 aa).

Cysteine 3 is lipidated: S-palmitoyl cysteine. Basic and acidic residues predominate over residues 17–41; it reads RDSDNSYRRNGEVTGRDNNKTHPEN. A disordered region spans residues 17–55; sequence RDSDNSYRRNGEVTGRDNNKTHPENPKTVNEQNKNNDED. The 278-residue stretch at 79 to 356 folds into the Protein kinase domain; the sequence is FRQECLIGEG…SDVVTALGFL (278 aa). ATP contacts are provided by residues 85–93 and lysine 108; that span reads IGEGGFGRV. Tyrosine 153 carries the phosphotyrosine modification. Aspartate 206 functions as the Proton acceptor in the catalytic mechanism. Serine 240 is subject to Phosphoserine. Threonine 246 bears the Phosphothreonine mark. A Phosphotyrosine modification is found at tyrosine 254. Residues 364–394 form a disordered region; sequence ISVPHYDDPPQPSDETSVEDSVAAEERERAV.

Belongs to the protein kinase superfamily. Ser/Thr protein kinase family. Palmitoylation at Cys-3 and Cys-6 are required for plasma membrane location.

The protein resides in the cell membrane. It catalyses the reaction L-seryl-[protein] + ATP = O-phospho-L-seryl-[protein] + ADP + H(+). The catalysed reaction is L-threonyl-[protein] + ATP = O-phospho-L-threonyl-[protein] + ADP + H(+). Its function is as follows. May be involved in plant defense signaling. In Arabidopsis thaliana (Mouse-ear cress), this protein is Probable serine/threonine-protein kinase PBL26.